The sequence spans 252 residues: MVDPLCNYNVLEAIFSYLELSDLSRCSQVCKSWYHFLNDENSDVWRWHCLRKLPKESIKSDLLASVTTYKTKLRAYLHAWNPNDCSRNVYIKPNGFTLHRNPVAQSTDAARAKIGFRQGRHAWEVIWEGPLGTVAVIGISTKEAALQCHGYVALLGSDDQSWGWNLVENHLLHNGDMQGNYPLLNNAPKYQVGERIRVILDCDDNTLSFEKNYEFLGVAFRGLPAKKLYPTVSAVYGNTEVSMVYLGTPLDG.

Residues 1–48 enclose the F-box domain; sequence MVDPLCNYNVLEAIFSYLELSDLSRCSQVCKSWYHFLNDENSDVWRWH. One can recognise a B30.2/SPRY domain in the interval 58–250; that stretch reads IKSDLLASVT…VSMVYLGTPL (193 aa).

Belongs to the FBXO45/Fsn family. In terms of assembly, component of an E3 ubiquitin ligase complex composed of hiw and Fsn.

It localises to the synapse. The protein operates within protein modification; protein ubiquitination. Required in the presynaptic motoneuron to down-regulate the levels of wnd and restrain synaptic terminal growth at the neuromuscular junction (NMJ). The chain is F-box/SPRY domain-containing protein 1 from Drosophila mojavensis (Fruit fly).